We begin with the raw amino-acid sequence, 573 residues long: Probable D-xylulose kinase A (573 aa).

Residues His-97, Arg-168, Asp-284, and Asn-285 each contribute to the substrate site. ATP is bound by residues Trp-366, 471-472 (GG), and Asn-475.

Belongs to the FGGY kinase family.

The protein resides in the cytoplasm. The enzyme catalyses D-xylulose + ATP = D-xylulose 5-phosphate + ADP + H(+). Its function is as follows. Highly specific D-xylulose kinase which participates in the catabolism of xylose. Xylose is a major component of hemicelluloses such as xylan. Most fungi utilize D-xylose via three enzymatic reactions, xylose reductase (XR), xylitol dehydrogenase (XDH), and xylulokinase, to form xylulose 5-phosphate, which enters pentose phosphate pathway. This chain is Probable D-xylulose kinase A (xkiA), found in Aspergillus clavatus (strain ATCC 1007 / CBS 513.65 / DSM 816 / NCTC 3887 / NRRL 1 / QM 1276 / 107).